We begin with the raw amino-acid sequence, 149 residues long: Large ribosomal subunit protein uL13 (149 aa).

This sequence belongs to the universal ribosomal protein uL13 family. As to quaternary structure, part of the 50S ribosomal subunit.

This protein is one of the early assembly proteins of the 50S ribosomal subunit, although it is not seen to bind rRNA by itself. It is important during the early stages of 50S assembly. The protein is Large ribosomal subunit protein uL13 of Borrelia hermsii (strain HS1 / DAH).